A 687-amino-acid polypeptide reads, in one-letter code: Pentatricopeptide repeat-containing protein At3g09060 (687 aa).

PPR repeat units follow at residues 42-76 (SAVV…ECKC), 77-107 (DEDV…MREI), 113-147 (AIRS…GVAP), 148-182 (NLQT…GFKP), 183-217 (DVFS…GVAP), 218-253 (DVTC…SVYP), 254-288 (NVKT…EREK), 289-323 (DLYT…KASI), 324-358 (DVVT…NSVN), 359-392 (IVSY…GYAA), 393-427 (DKTT…GGHL), 428-462 (DVYA…GVEL), 463-497 (NSHV…GCRP), 498-532 (TVVS…GWKP), 533-567 (DLKT…GLET), 568-602 (DVMM…NCTA), 603-637 (NLVT…GLQP), and 638-672 (DIIS…GIFP).

This sequence belongs to the PPR family. P subfamily.

The sequence is that of Pentatricopeptide repeat-containing protein At3g09060 from Arabidopsis thaliana (Mouse-ear cress).